A 450-amino-acid chain; its full sequence is MSHPIVRFAPSPTGRIHIGNARPALLNFLFARKYHGEFILRFDDTDLERSKEEYAASIEVDLAWLGITPDRTLRQSQRFALYREAAEVLRSKGRLYPCYETAEELDRKRKRQQARGLPPIYDRAALALSEADRAKLEAEGRRPHWRFKLDPGIARWDDLIRGESHIDAASLSDPILLREDGSYLYTLPSVVDDIDCKITHVIRGEDHVTNTAVQIQLFEALAGHGHVPVFGHHNLLSSASGEGFSKRTGSLSIGSLRDQGFESLAVAAAAVLTGSSVAVHPVKSLDELVAGFDLASLSRTQARFDPAELANLSARTLHQLDFETVRDRLAAHDITGYKAKAFWEAVRGNLTVFLDCIDWWRVVEGEIPPVTEDTAFLDLAKNNLPEEPWDEKAWSSWTGRLKDQTGRKGKALFHPLRLALTGRETGPELAALLPLIGRLKATARLSGHVA.

Residues 10–20 carry the 'HIGH' region motif; the sequence is PSPTGRIHIGN. Residues 243 to 247 carry the 'KMSKS' region motif; the sequence is GFSKR. Lys-246 is an ATP binding site.

Belongs to the class-I aminoacyl-tRNA synthetase family. Glutamate--tRNA ligase type 1 subfamily. In terms of assembly, monomer.

Its subcellular location is the cytoplasm. It carries out the reaction tRNA(Glu) + L-glutamate + ATP = L-glutamyl-tRNA(Glu) + AMP + diphosphate. Catalyzes the attachment of glutamate to tRNA(Glu) in a two-step reaction: glutamate is first activated by ATP to form Glu-AMP and then transferred to the acceptor end of tRNA(Glu). This is Glutamate--tRNA ligase 2 from Beijerinckia indica subsp. indica (strain ATCC 9039 / DSM 1715 / NCIMB 8712).